The sequence spans 863 residues: Major vault protein (863 aa).

9 MVP repeats span residues 2–60 (DADH…VPPR), 61–115 (HYCV…DVTP), 116–168 (LQIV…EVIK), 169–221 (ATVI…DIVS), 222–276 (AFIL…GVVD), 277–327 (VTTL…IQDV), 328–396 (YVLS…TRTA), 397–471 (IPLD…KTRV), and 472–534 (VSYR…LLGP). A disordered region spans residues 349-368 (GDEAEEEERESRAKKRGVQR). An IQ domain is found at 677 to 706 (ARHEAERLEQEARGRLERQKITDQAEAEKA).

The vault ribonucleoprotein particle is a huge (400 A x 670 A) cage structure of 12.9 MDa. It consists of a dimer of half-vaults, with each half-vault comprising 39 identical major vault protein (MVP) chains, PARP4 and one or more vault RNAs (vRNAs).

The protein resides in the cytoplasm. It localises to the nucleus. In terms of biological role, required for normal vault structure. Vaults are multi-subunit structures that may act as scaffolds for proteins involved in signal transduction. Vaults may also play a role in nucleo-cytoplasmic transport. This Danio rerio (Zebrafish) protein is Major vault protein (mvp).